The chain runs to 118 residues: Protein Rev (118 aa).

Phosphoserine; by host CK2 occurs at positions 5 and 8. Residues 18 to 26 (LIKFLYQSN) form a homomultimerization region. The tract at residues 23-46 (YQSNPPPSPEGTRQARRNRRRRWR) is disordered. The Nuclear localization signal and RNA-binding (RRE) motif lies at 34–50 (TRQARRNRRRRWRARQR). The segment covering 36 to 46 (QARRNRRRRWR) has biased composition (basic residues). A Nuclear export signal and binding to XPO1 motif is present at residues 73–84 (LQLPPLERLNLN). Residues 87–118 (EDCRTSGTQGVGHPQISVESPTVLESGTEEQC) are disordered. Ser-92 is modified (phosphoserine; by host). Residues 103-112 (SVESPTVLES) show a composition bias toward polar residues.

Belongs to the HIV-1 REV protein family. In terms of assembly, homomultimer; when bound to the RRE. Multimeric assembly is essential for activity and may involve XPO1. Binds to human KPNB1, XPO1, TNPO1, RANBP5 and IPO7. Interacts with the viral Integrase. Interacts with human KHDRBS1. Interacts with human NAP1; this interaction decreases Rev multimerization and stimulates its activity. Interacts with human DEAD-box helicases DDX3 and DDX24; these interactions may serve for viral RNA export to the cytoplasm and packaging, respectively. Interacts with human PSIP1; this interaction may inhibit HIV-1 DNA integration by promoting dissociation of the Integrase-LEDGF/p75 complex. Asymmetrically arginine dimethylated at one site by host PRMT6. Methylation impairs the RNA-binding activity and export of viral RNA from the nucleus to the cytoplasm. Post-translationally, phosphorylated by protein kinase CK2. Presence of, and maybe binding to the N-terminus of the regulatory beta subunit of CK2 is necessary for CK2-mediated Rev's phosphorylation.

It localises to the host nucleus. The protein resides in the host nucleolus. Its subcellular location is the host cytoplasm. Escorts unspliced or incompletely spliced viral pre-mRNAs (late transcripts) out of the nucleus of infected cells. These pre-mRNAs carry a recognition sequence called Rev responsive element (RRE) located in the env gene, that is not present in fully spliced viral mRNAs (early transcripts). This function is essential since most viral proteins are translated from unspliced or partially spliced pre-mRNAs which cannot exit the nucleus by the pathway used by fully processed cellular mRNAs. Rev itself is translated from a fully spliced mRNA that readily exits the nucleus. Rev's nuclear localization signal (NLS) binds directly to KPNB1/Importin beta-1 without previous binding to KPNA1/Importin alpha-1. KPNB1 binds to the GDP bound form of RAN (Ran-GDP) and targets Rev to the nucleus. In the nucleus, the conversion from Ran-GDP to Ran-GTP dissociates Rev from KPNB1 and allows Rev's binding to the RRE in viral pre-mRNAs. Rev multimerization on the RRE via cooperative assembly exposes its nuclear export signal (NES) to the surface. Rev can then form a complex with XPO1/CRM1 and Ran-GTP, leading to nuclear export of the complex. Conversion from Ran-GTP to Ran-GDP mediates dissociation of the Rev/RRE/XPO1/RAN complex, so that Rev can return to the nucleus for a subsequent round of export. Beside KPNB1, also seems to interact with TNPO1/Transportin-1, RANBP5/IPO5 and IPO7/RANBP7 for nuclear import. The nucleoporin-like HRB/RIP is an essential cofactor that probably indirectly interacts with Rev to release HIV RNAs from the perinuclear region to the cytoplasm. The polypeptide is Protein Rev (Human immunodeficiency virus type 1 group M subtype D (isolate ELI) (HIV-1)).